Here is a 75-residue protein sequence, read N- to C-terminus: Mating pheromone Er-1/Er-3 (75 aa).

The N-terminal stretch at 1 to 19 (MNKLAILAIIAMVLFSANA) is a signal peptide. Residues 20–35 (FRFQSRLRSNVEAKTG) constitute a propeptide that is removed on maturation. Disulfide bonds link cysteine 38–cysteine 54, cysteine 45–cysteine 71, and cysteine 50–cysteine 63.

Homodimer.

It localises to the secreted. The protein resides in the cell membrane. Functionally, mating ciliate pheromones (or gamones) are diffusible extracellular communication signals that distinguish different intraspecific classes of cells commonly referred to as 'mating types'. They prepare the latter for conjugation by changing their cell surface properties. The membrane-bound form promotes inter-cellular communication and adhesion for mating pair formation and may act as binding site for the secreted form. The sequence is that of Mating pheromone Er-1/Er-3 (MAT1) from Euplotes raikovi.